Consider the following 100-residue polypeptide: EKC/KEOPS complex subunit GON7 (100 aa).

M1 carries the N-acetylmethionine modification. Positions 61-100 are disordered; sequence AAAPDEDLDGDDEDDAEDENNIDNRTNFDGPSAKRPKTPS. Over residues 64 to 81 the composition is skewed to acidic residues; that stretch reads PDEDLDGDDEDDAEDENN.

Component of the EKC/KEOPS complex composed of at least GON7, TP53RK, TPRKB, OSGEP and LAGE3; the whole complex dimerizes.

Its subcellular location is the nucleus. Its function is as follows. Component of the EKC/KEOPS complex that is required for the formation of a threonylcarbamoyl group on adenosine at position 37 (t(6)A37) in tRNAs that read codons beginning with adenine. The complex is probably involved in the transfer of the threonylcarbamoyl moiety of threonylcarbamoyl-AMP (TC-AMP) to the N6 group of A37. GON7 plays a supporting role to the catalytic subunit OSGEP in the complex. In Homo sapiens (Human), this protein is EKC/KEOPS complex subunit GON7.